Consider the following 376-residue polypeptide: c-di-GMP synthase (376 aa).

This sequence belongs to the CD-NTase family. G05 subfamily.

It carries out the reaction 2 GTP = 3',3'-c-di-GMP + 2 diphosphate. In terms of biological role, cyclic nucleotide synthase (second messenger synthase) of a CBASS antivirus system. CBASS (cyclic oligonucleotide-based antiphage signaling system) provides immunity against bacteriophage. The CD-NTase protein synthesizes cyclic nucleotides in response to infection; these serve as specific second messenger signals. The signals activate a diverse range of effectors, leading to bacterial cell death and thus abortive phage infection. A type I-D CBASS(GG) system. Cyclic dinucleotide synthase that catalyzes the synthesis of c-di-GMP, has no activity with other NTP substrates. This chain is c-di-GMP synthase, found in Roseivirga ehrenbergii (strain DSM 102268 / JCM 13514 / KCTC 12282 / NCIMB 14502 / KMM 6017).